The sequence spans 331 residues: MASTPKANVPKIDVSPLFGDNMEEKMKVARAIDAASRDTGFFYAVNHGVDVKRLSNKTREFHFSITDEEKWDLAIRAYNKEHQDQIRAGYYLSIPEKKAVESFCYLNPNFKPDHPLIQSKTPTHEVNVWPDEKKHPGFREFAEQYYWDVFGLSSALLRGYALALGKEEDFFSRHFKKEDALSSVVLIRYPYLNPIPPAAIKTAEDGTKLSFEWHEDVSLITVLYQSDVANLQVEMPQGYLDIEADDNAYLVNCGSYMAHITNNYYPAPIHRVKWVNEERQSLPFFVNLGFNDTVQPWDPSKEDGKTDQRPISYGDYLQNGLVSLINKNGQT.

Isopenicillin N is bound by residues Arg87, Tyr91, Ser183, and Tyr189. Positions 87, 91, 183, 189, 214, and 216 each coordinate N-[(5S)-5-amino-5-carboxypentanoyl]-L-cysteinyl-D-valine. The Fe2OG dioxygenase domain occupies 176–288; it reads KKEDALSSVV…RQSLPFFVNL (113 aa). Positions 214, 216, and 270 each coordinate Fe(2+). 2-oxoglutarate is bound at residue Arg279. Ser281 lines the isopenicillin N pocket. Residue Ser281 coordinates N-[(5S)-5-amino-5-carboxypentanoyl]-L-cysteinyl-D-valine.

Belongs to the iron/ascorbate-dependent oxidoreductase family. As to quaternary structure, monomer. It depends on Fe(2+) as a cofactor.

Its subcellular location is the cytoplasm. It localises to the cytosol. The catalysed reaction is N-[(5S)-5-amino-5-carboxypentanoyl]-L-cysteinyl-D-valine + O2 = isopenicillin N + 2 H2O. Its pathway is antibiotic biosynthesis; penicillin G biosynthesis; penicillin G from L-alpha-aminoadipate and L-cysteine and L-valine: step 2/3. Its function is as follows. Isopenicillin N synthase; part of the gene cluster that mediates the biosynthesis of penicillin, the world's most important antibiotic. IpnA catalyzes the cyclization of the tripeptide N-[(5S)-5-amino-5-carboxypentanoyl]-L-cysteinyl-D-valine (LLD-ACV or ACV) to form isopenicillin N (IPN) that contains the beta-lactam nucleus. The penicillin biosynthesis occurs via 3 enzymatic steps, the first corresponding to the production of the tripeptide N-[(5S)-5-amino-5-carboxypentanoyl]-L-cysteinyl-D-valine (LLD-ACV or ACV) by the NRPS acvA. The tripeptide ACV is then cyclized to isopenicillin N (IPN) by the isopenicillin N synthase ipnA that forms the beta-lactam nucleus. Finally, the alpha-aminoadipyl side chain is exchanged for phenylacetic acid by the isopenicillin N acyltransferase aatA to yield penicillin in the peroxisomal matrix. The sequence is that of Isopenicillin N synthase from Penicillium chrysogenum (Penicillium notatum).